Here is a 660-residue protein sequence, read N- to C-terminus: DNA mismatch repair protein MutL (660 aa).

Over residues 341 to 355 (SFQSDGAPPTQQLSS) the composition is skewed to polar residues. Disordered regions lie at residues 341-362 (SFQS…EKAE) and 378-398 (ALSP…RVER). Residues 385-398 (ELPKSPERSERVER) are compositionally biased toward basic and acidic residues.

This sequence belongs to the DNA mismatch repair MutL/HexB family.

Functionally, this protein is involved in the repair of mismatches in DNA. It is required for dam-dependent methyl-directed DNA mismatch repair. May act as a 'molecular matchmaker', a protein that promotes the formation of a stable complex between two or more DNA-binding proteins in an ATP-dependent manner without itself being part of a final effector complex. This Heliobacterium modesticaldum (strain ATCC 51547 / Ice1) protein is DNA mismatch repair protein MutL.